The primary structure comprises 176 residues: Vitamin K epoxide reductase complex subunit 1-like protein 1 (176 aa).

At 1–13 (MAAPVLLRVSVPR) the chain is on the cytoplasmic side. The helical transmembrane segment at 14 to 36 (WERVARYAVCAAGILLSIYAYHV) threads the bilayer. Over 37-87 (EREKERDPEHRALCDLGPWVKCSAALASRWGRGFGLLGSIFGKDGVLNQPN) the chain is Lumenal. An intrachain disulfide couples Cys-50 to Cys-58. A (S)-warfarin-binding site is contributed by Asn-87. Residues 88-102 (SVFGLIFYILQLLLG) form a helical membrane-spanning segment. The Cytoplasmic segment spans residues 103–107 (MTASA). The helical transmembrane segment at 108 to 135 (VAALVLMTSSIVSVVGSLYLAYILYFVL) threads the bilayer. Over 136–138 (KEF) the chain is Lumenal. Cys-139 and Cys-142 are joined by a disulfide. Residues 139–160 (CIICVTTYVLNFLLLIINYKRL) form a helical membrane-spanning segment. Residues Cys-142 and Tyr-146 each contribute to the phylloquinone site. Tyr-146 lines the (S)-warfarin pocket. Residues 161–176 (VYLNEAWKRQLQPKED) lie on the Cytoplasmic side of the membrane.

Belongs to the VKOR family. In terms of tissue distribution, detected in testis and lung.

Its subcellular location is the endoplasmic reticulum membrane. It catalyses the reaction phylloquinone + [protein]-disulfide + H2O = 2,3-epoxyphylloquinone + [protein]-dithiol. The enzyme catalyses phylloquinol + [protein]-disulfide = phylloquinone + [protein]-dithiol. Inhibited by warfarin (coumadin). Warfarin locks VKORC1 in both redox states into the closed conformation. In terms of biological role, involved in vitamin K metabolism. Can reduce inactive vitamin K 2,3-epoxide to active vitamin K, and may contribute to vitamin K-mediated protection against oxidative stress. Plays a role in vitamin K-dependent gamma-carboxylation of Glu residues in target proteins. The chain is Vitamin K epoxide reductase complex subunit 1-like protein 1 (Vkorc1l1) from Mus musculus (Mouse).